The following is a 231-amino-acid chain: Chromosome partition protein MukE (231 aa).

Residues 211–231 (SLLADEEEQDYNEQAELEGEA) are disordered. Positions 214–231 (ADEEEQDYNEQAELEGEA) are enriched in acidic residues.

Belongs to the MukE family. Interacts, and probably forms a ternary complex, with MukF and MukB. The complex formation is stimulated by calcium or magnesium.

Its subcellular location is the cytoplasm. The protein resides in the nucleoid. Involved in chromosome condensation, segregation and cell cycle progression. May participate in facilitating chromosome segregation by condensation DNA from both sides of a centrally located replisome during cell division. Probably acts via its interaction with MukB and MukF. This chain is Chromosome partition protein MukE, found in Vibrio vulnificus (strain CMCP6).